A 276-amino-acid chain; its full sequence is Diaminopimelate epimerase (276 aa).

3 residues coordinate substrate: asparagine 13, glutamine 46, and asparagine 66. Residue cysteine 75 is the Proton donor of the active site. Substrate-binding positions include 76 to 77 (GN), asparagine 159, asparagine 192, and 210 to 211 (ER). Cysteine 219 functions as the Proton acceptor in the catalytic mechanism. Residue 220–221 (GT) participates in substrate binding.

This sequence belongs to the diaminopimelate epimerase family. Homodimer.

The protein localises to the cytoplasm. The enzyme catalyses (2S,6S)-2,6-diaminopimelate = meso-2,6-diaminopimelate. Its pathway is amino-acid biosynthesis; L-lysine biosynthesis via DAP pathway; DL-2,6-diaminopimelate from LL-2,6-diaminopimelate: step 1/1. Its function is as follows. Catalyzes the stereoinversion of LL-2,6-diaminopimelate (L,L-DAP) to meso-diaminopimelate (meso-DAP), a precursor of L-lysine and an essential component of the bacterial peptidoglycan. This chain is Diaminopimelate epimerase, found in Pseudomonas aeruginosa (strain UCBPP-PA14).